A 124-amino-acid chain; its full sequence is Glycine cleavage system H protein (124 aa).

Positions 22–104 constitute a Lipoyl-binding domain; the sequence is LVITGITDHA…YGKGWIYKIK (83 aa). N6-lipoyllysine is present on Lys-63.

Belongs to the GcvH family. In terms of assembly, the glycine cleavage system is composed of four proteins: P, T, L and H. (R)-lipoate is required as a cofactor.

In terms of biological role, the glycine cleavage system catalyzes the degradation of glycine. The H protein shuttles the methylamine group of glycine from the P protein to the T protein. The sequence is that of Glycine cleavage system H protein from Acinetobacter baumannii (strain ACICU).